The sequence spans 368 residues: NAD(P)H-quinone oxidoreductase subunit 1, chloroplastic (368 aa).

6 consecutive transmembrane segments (helical) span residues 27–47 (FIWI…GVLV), 97–117 (WLFN…YLVI), 130–150 (IGVF…LMAG), 269–289 (SSLF…PFLL), 308–328 (IIIG…IAIM), and 348–368 (FLLP…AFLL).

Belongs to the complex I subunit 1 family. NDH is composed of at least 16 different subunits, 5 of which are encoded in the nucleus.

The protein localises to the plastid. It is found in the chloroplast thylakoid membrane. It catalyses the reaction a plastoquinone + NADH + (n+1) H(+)(in) = a plastoquinol + NAD(+) + n H(+)(out). The enzyme catalyses a plastoquinone + NADPH + (n+1) H(+)(in) = a plastoquinol + NADP(+) + n H(+)(out). Functionally, NDH shuttles electrons from NAD(P)H:plastoquinone, via FMN and iron-sulfur (Fe-S) centers, to quinones in the photosynthetic chain and possibly in a chloroplast respiratory chain. The immediate electron acceptor for the enzyme in this species is believed to be plastoquinone. Couples the redox reaction to proton translocation, and thus conserves the redox energy in a proton gradient. The protein is NAD(P)H-quinone oxidoreductase subunit 1, chloroplastic of Physcomitrium patens (Spreading-leaved earth moss).